Here is a 505-residue protein sequence, read N- to C-terminus: UDP-N-acetylglucosamine diphosphorylase 1 (505 aa).

Residues 1–10 (MIEPSMEREN) are compositionally biased toward basic and acidic residues. Residues 1 to 32 (MIEPSMERENGALTAATTTTTAVTSPPPMASS) are disordered. Over residues 14–24 (TAATTTTTAVT) the composition is skewed to low complexity. Positions 134–137 (LSGG) match the Substrate binding motif. Residue asparagine 253 coordinates substrate. Residues 335–336 (EY) carry the Substrate binding motif. Lysine 432 provides a ligand contact to substrate.

This sequence belongs to the UDPGP type 1 family. As to quaternary structure, monomer. Mg(2+) is required as a cofactor. It depends on Mn(2+) as a cofactor. As to expression, expressed in root tips, stipules and mature pollen grains.

It catalyses the reaction N-acetyl-alpha-D-glucosamine 1-phosphate + UTP + H(+) = UDP-N-acetyl-alpha-D-glucosamine + diphosphate. It carries out the reaction N-acetyl-alpha-D-galactosamine 1-phosphate + UTP + H(+) = UDP-N-acetyl-alpha-D-galactosamine + diphosphate. It functions in the pathway nucleotide-sugar biosynthesis; UDP-N-acetyl-alpha-D-glucosamine biosynthesis; UDP-N-acetyl-alpha-D-glucosamine from N-acetyl-alpha-D-glucosamine 1-phosphate: step 1/1. Its activity is regulated as follows. Inhibited by hygromycin and streptomycin, but not by gentamycin or kanamycin. Functionally, uridylyltransferase involved in the biosynthesis of UDP-glucosamine, an essential precursor for glycoprotein and glycolipid synthesis. Can use both UDP-glucosamine and the 4-epimer UDP-galactosamine as substrates, but no other sugars or NTPs. Acts redundantly with GLCNAC1PUT2. Required for gametogenesis and embryo development. This Arabidopsis thaliana (Mouse-ear cress) protein is UDP-N-acetylglucosamine diphosphorylase 1 (GLCNAC1PUT1).